The primary structure comprises 179 residues: Putative invertase inhibitor (179 aa).

An N-terminal signal peptide occupies residues 1-23 (MKLSFSLCIFFFNLLLLLQAVIS). 2 disulfides stabilise this stretch: C31–C46 and C102–C142.

It belongs to the PMEI family. Monomer. Post-translationally, not glycosylated. As to expression, expressed in pollen (at protein level). Expressed in stem, but not leaves (at protein level). Expressed in pollen.

It is found in the secreted. The protein resides in the cell wall. The protein localises to the endoplasmic reticulum. Functionally, invertase inhibitor. The protein is Putative invertase inhibitor of Platanus acerifolia (London plane tree).